A 382-amino-acid chain; its full sequence is Queuine tRNA-ribosyltransferase (382 aa).

The active-site Proton acceptor is the Asp-93. Substrate is bound by residues 93 to 97 (DSGGF), Asp-147, Gln-191, and Gly-218. The tract at residues 249–255 (GVGKPED) is RNA binding. The active-site Nucleophile is the Asp-268. The segment at 273–277 (TRNAR) is RNA binding; important for wobble base 34 recognition. Residues Cys-306, Cys-308, Cys-311, and His-337 each coordinate Zn(2+).

The protein belongs to the queuine tRNA-ribosyltransferase family. As to quaternary structure, homodimer. Within each dimer, one monomer is responsible for RNA recognition and catalysis, while the other monomer binds to the replacement base PreQ1. Requires Zn(2+) as cofactor.

The enzyme catalyses 7-aminomethyl-7-carbaguanine + guanosine(34) in tRNA = 7-aminomethyl-7-carbaguanosine(34) in tRNA + guanine. It participates in tRNA modification; tRNA-queuosine biosynthesis. Its function is as follows. Catalyzes the base-exchange of a guanine (G) residue with the queuine precursor 7-aminomethyl-7-deazaguanine (PreQ1) at position 34 (anticodon wobble position) in tRNAs with GU(N) anticodons (tRNA-Asp, -Asn, -His and -Tyr). Catalysis occurs through a double-displacement mechanism. The nucleophile active site attacks the C1' of nucleotide 34 to detach the guanine base from the RNA, forming a covalent enzyme-RNA intermediate. The proton acceptor active site deprotonates the incoming PreQ1, allowing a nucleophilic attack on the C1' of the ribose to form the product. After dissociation, two additional enzymatic reactions on the tRNA convert PreQ1 to queuine (Q), resulting in the hypermodified nucleoside queuosine (7-(((4,5-cis-dihydroxy-2-cyclopenten-1-yl)amino)methyl)-7-deazaguanosine). This chain is Queuine tRNA-ribosyltransferase, found in Actinobacillus pleuropneumoniae serotype 3 (strain JL03).